Consider the following 448-residue polypeptide: Glutamyl-tRNA reductase (448 aa).

Residues 52-55 (TCNR), S105, 110-112 (EDQ), and Q116 contribute to the substrate site. C53 acts as the Nucleophile in catalysis. 184–189 (GAGEMG) contributes to the NADP(+) binding site. Residues 406 to 435 (DPDFGGPDQATPPEFTKGMSVEDIPDGMRD) form a disordered region.

Belongs to the glutamyl-tRNA reductase family. Homodimer.

It carries out the reaction (S)-4-amino-5-oxopentanoate + tRNA(Glu) + NADP(+) = L-glutamyl-tRNA(Glu) + NADPH + H(+). It functions in the pathway porphyrin-containing compound metabolism; protoporphyrin-IX biosynthesis; 5-aminolevulinate from L-glutamyl-tRNA(Glu): step 1/2. Catalyzes the NADPH-dependent reduction of glutamyl-tRNA(Glu) to glutamate 1-semialdehyde (GSA). This chain is Glutamyl-tRNA reductase, found in Haloarcula marismortui (strain ATCC 43049 / DSM 3752 / JCM 8966 / VKM B-1809) (Halobacterium marismortui).